Here is a 188-residue protein sequence, read N- to C-terminus: COMM domain-containing protein 1 (188 aa).

Residues 1-122 form a sufficient for interaction with SLC12A2 region; sequence MAAELEGSKC…CWDRGLRSLS (122 aa). The Cu cation site is built by His-100, Met-109, and His-133. The COMM domain occupies 117-185; the sequence is GLRSLSWRVD…EVEESISTLM (69 aa). The segment at 124-188 is required for binding to PtdIns(4,5)P2; the sequence is RVDGKSQSRH…ESISTLMQPA (65 aa).

Belongs to the COMM domain-containing protein 1 family. As to quaternary structure, component of the commander complex consisting of the CCC subcomplex and the retriever subcomplex. Component of the CCC (COMMD/CCDC22/CCDC93) subcomplex consisting of COMMD1, COMMD2, COMMD3, COMMD4, COMMD5, COMMD6, COMMD7, COMMD8, COMMD9, COMMD10, CCDC22 and CCDC93; within the complex forms a heterodimer with COMMD6. Interacts with VPS35L; the interaction associates the CCC complex with the retriever complex. Identified in a complex with an E3 ubiquitin ligase complex composed of TCEB1/elongin C, CUL2, SOCS1 and RBX1; in the complex interacts directly with SOCS1 and CUL2. Identified in a complex with NF-kappa-B. Interacts directly with SLC12A2. Interacts directly with ATP7B (via the N-terminal region). Interacts with ATP7A. Interacts with FAM107A; this interaction stabilizes COMMD1 in the nucleus. Interacts with CCS, CDKN2A, RELA, REL, RELB, NFKB1/p105, NFKB2/p100, NFKBIB, SCNN1D, SCNN1B, CFTR, CLU, SGK1, AKT1, CUL1, CUL2, CUL3, CUL4A, CUL4B, CUL5, CUL7, HIF1A. In terms of processing, ubiquitinated; undergoes both 'Lys-63'- and 'Lys-48'-linked polyubiquitination. Ubiquitinated by XIAP, leading to its proteasomal degradation.

It localises to the nucleus. The protein localises to the cytoplasm. Its subcellular location is the endosome membrane. It is found in the cytoplasmic vesicle. The protein resides in the early endosome. It localises to the recycling endosome. Scaffold protein in the commander complex that is essential for endosomal recycling of transmembrane cargos; the commander complex is composed of the CCC subcomplex and the retriever subcomplex. Can modulate activity of cullin-RING E3 ubiquitin ligase (CRL) complexes by displacing CAND1; in vitro promotes CRL E3 activity and dissociates CAND1 from CUL1 and CUL2. Promotes ubiquitination of NF-kappa-B subunit RELA and its subsequent proteasomal degradation. Down-regulates NF-kappa-B activity. Involved in the regulation of membrane expression and ubiquitination of SLC12A2. Modulates Na(+) transport in epithelial cells by regulation of apical cell surface expression of amiloride-sensitive sodium channel (ENaC) subunits and by promoting their ubiquitination presumably involving NEDD4L. Promotes the localization of SCNN1D to recycling endosomes. Promotes CFTR cell surface expression through regulation of its ubiquitination. Down-regulates SOD1 activity by interfering with its homodimerization. Plays a role in copper ion homeostasis. Involved in copper-dependent ATP7A trafficking between the trans-Golgi network and vesicles in the cell periphery; the function is proposed to depend on its association within the CCC complex and cooperation with the WASH complex on early endosomes. Can bind one copper ion per monomer. May function to facilitate biliary copper excretion within hepatocytes. Binds to phosphatidylinositol 4,5-bisphosphate (PtdIns(4,5)P2). Involved in the regulation of HIF1A-mediated transcription; competes with ARNT/Hif-1-beta for binding to HIF1A resulting in decreased DNA binding and impaired transcriptional activation by HIF-1. Negatively regulates neuroblastoma G1/S phase cell cycle progression and cell proliferation by stimulating ubiquitination of NF-kappa-B subunit RELA and NF-kappa-B degradation in a FAM107A- and actin-dependent manner. This Bos taurus (Bovine) protein is COMM domain-containing protein 1 (COMMD1).